A 124-amino-acid polypeptide reads, in one-letter code: Apolipoprotein C-IV (124 aa).

The N-terminal stretch at 1–27 is a signal peptide; that stretch reads MLLPRRGLRTLPSLCLYILVLVWVVAC.

The protein belongs to the apolipoprotein C4 family. In terms of processing, glycosylated; contains sialic acid. Present in up to five sialylated isoforms. As to expression, blood plasma, associated primarily with VLDL and HDL. Expressed mainly in the liver.

It is found in the secreted. Its function is as follows. May participate in lipoprotein metabolism. This Oryctolagus cuniculus (Rabbit) protein is Apolipoprotein C-IV (APOC4).